A 278-amino-acid polypeptide reads, in one-letter code: uncharacterized protein (278 aa).

Basic and acidic residues predominate over residues 1–11 (MMIHIHQDKKM). Disordered stretches follow at residues 1–107 (MMIH…RYFK) and 206–278 (KVSA…KASR). The span at 62–94 (KQSGGKNAKSGSKSAKSGSKSAKSGSKTSKTQS) shows a compositional bias: low complexity. Residues 97 to 107 (KGDESRDRYFK) are compositionally biased toward basic and acidic residues. Positions 249 to 260 (SAKNAKSTGNKK) are enriched in polar residues. Low complexity predominate over residues 264–278 (KSAGAKKAPAAKASR).

This is an uncharacterized protein from Acanthamoeba polyphaga mimivirus (APMV).